A 174-amino-acid polypeptide reads, in one-letter code: Xanthine-guanine phosphoribosyltransferase (174 aa).

5-phospho-alpha-D-ribose 1-diphosphate contacts are provided by residues 49–50 (RG) and 108–116 (DDLVDTGAT). Asp109 contributes to the Mg(2+) binding site. Positions 112 and 155 each coordinate guanine. Xanthine is bound by residues Asp112 and Ile155. GMP-binding positions include 112–116 (DTGAT) and 154–155 (WI).

Belongs to the purine/pyrimidine phosphoribosyltransferase family. XGPT subfamily. Homotetramer. Mg(2+) serves as cofactor.

The protein resides in the cell inner membrane. The catalysed reaction is GMP + diphosphate = guanine + 5-phospho-alpha-D-ribose 1-diphosphate. It catalyses the reaction XMP + diphosphate = xanthine + 5-phospho-alpha-D-ribose 1-diphosphate. It carries out the reaction IMP + diphosphate = hypoxanthine + 5-phospho-alpha-D-ribose 1-diphosphate. It functions in the pathway purine metabolism; GMP biosynthesis via salvage pathway; GMP from guanine: step 1/1. Its pathway is purine metabolism; XMP biosynthesis via salvage pathway; XMP from xanthine: step 1/1. Its function is as follows. Purine salvage pathway enzyme that catalyzes the transfer of the ribosyl-5-phosphate group from 5-phospho-alpha-D-ribose 1-diphosphate (PRPP) to the N9 position of the 6-oxopurines guanine and xanthine to form the corresponding ribonucleotides GMP (guanosine 5'-monophosphate) and XMP (xanthosine 5'-monophosphate), with the release of PPi. To a lesser extent, also acts on hypoxanthine. The polypeptide is Xanthine-guanine phosphoribosyltransferase (Rhodopseudomonas palustris (strain BisB18)).